Here is a 344-residue protein sequence, read N- to C-terminus: tRNA(Ile)-lysidine synthase (344 aa).

An ATP-binding site is contributed by 35–40; it reads SGGPDS.

It belongs to the tRNA(Ile)-lysidine synthase family.

The protein localises to the cytoplasm. The enzyme catalyses cytidine(34) in tRNA(Ile2) + L-lysine + ATP = lysidine(34) in tRNA(Ile2) + AMP + diphosphate + H(+). Functionally, ligates lysine onto the cytidine present at position 34 of the AUA codon-specific tRNA(Ile) that contains the anticodon CAU, in an ATP-dependent manner. Cytidine is converted to lysidine, thus changing the amino acid specificity of the tRNA from methionine to isoleucine. This chain is tRNA(Ile)-lysidine synthase, found in Methylobacterium sp. (strain 4-46).